We begin with the raw amino-acid sequence, 365 residues long: HLA class I histocompatibility antigen, A alpha chain (365 aa).

Residues 1–24 (MAVMAPRTLLLLLSGALALTQTWA) form the signal peptide. Positions 3–11 (VMAPRTLLL) are VL9 epitope. Residues 25–114 (GSHSMRYFFT…LRGYYNQSEA (90 aa)) form an alpha-1 region. The Extracellular segment spans residues 25–308 (GSHSMRYFFT…ELSSQPTIPI (284 aa)). Y31 provides a ligand contact to a peptide antigen. Y83 carries the post-translational modification Sulfotyrosine. 2 residues coordinate a peptide antigen: T97 and Y108. N-linked (GlcNAc...) asparagine glycosylation occurs at N110. The segment at 115-206 (GSHTIQIMYG…ENGKETLQRT (92 aa)) is alpha-2. A disulfide bridge links C125 with C188. Positions 140, 167, 170, 183, and 195 each coordinate a peptide antigen. Residues 207-298 (DPPKTHMTHH…GLPKPLTLRW (92 aa)) form an alpha-3 region. The Ig-like C1-type domain occupies 209–295 (PKTHMTHHPI…QHEGLPKPLT (87 aa)). A disulfide bridge links C227 with C283. A connecting peptide region spans residues 299-308 (ELSSQPTIPI). The helical transmembrane segment at 309 to 332 (VGIIAGLVLLGAVITGAVVAAVMW) threads the bilayer. At 333-365 (RRKSSDRKGGSYTQAASSDSAQGSDVSLTACKV) the chain is on the cytoplasmic side. The interval 339–365 (RKGGSYTQAASSDSAQGSDVSLTACKV) is disordered. S343 is subject to Phosphoserine. Y344 carries the post-translational modification Phosphotyrosine. A compositionally biased stretch (low complexity) spans 346–359 (QAASSDSAQGSDVS). Residues S349, S350, S352, S356, and S359 each carry the phosphoserine modification.

It belongs to the MHC class I family. In terms of assembly, heterotrimer that consists of an alpha chain HLA-A, a beta chain B2M and a peptide (peptide-HLA-A-B2M). Early in biogenesis, HLA-A-B2M dimer interacts with the components of the peptide-loading complex composed of TAPBP, TAP1-TAP2, TAPBPL, PDIA3/ERP57 and CALR. Interacts with TAP1-TAP2 transporter via TAPBP; this interaction is obligatory for the loading of peptide epitopes delivered to the ER by TAP1-TAP2 transporter. Interacts with TAPBPL; TAPBPL binds peptide-free HLA-A-B2M complexes or those loaded with low affinity peptides, likely facilitating peptide exchange for higher affinity peptides. Only optimally assembled peptide-HLA-B2M trimer translocates to the surface of antigen-presenting cells, where it interacts with TCR and CD8 coreceptor on the surface of T cells. HLA-A (via polymorphic alpha-1 and alpha-2 domains) interacts with antigen-specific TCR (via CDR3 domains). One HLA-A molecule (mainly via nonpolymorphic alpha-3 domain) interacts with one CD8A homodimer (via CDR-like loop); this interaction ensures peptide-HLA-A-B2M recognition by CD8-positive T cells only. Alleles A*23:01; A*24:02 and A*32:01 interact (via Bw4 motif) with KIR3DL1 on NK cells; this interaction is direct. As to quaternary structure, (Microbial infection) Interacts with HHV-8 MIR1 protein. (Microbial infection) Interacts with HTLV-1 accessory protein p12I. (Microbial infection) Polyubiquitinated in a post ER compartment by interaction with human herpesvirus 8 MIR1 protein. This targets the protein for rapid degradation via the ubiquitin system. Post-translationally, N-linked glycosylation at Asn-110. In terms of tissue distribution, ubiquitous.

It localises to the cell membrane. Its subcellular location is the endoplasmic reticulum membrane. Antigen-presenting major histocompatibility complex class I (MHCI) molecule. In complex with B2M/beta 2 microglobulin displays primarily viral and tumor-derived peptides on antigen-presenting cells for recognition by alpha-beta T cell receptor (TCR) on HLA-A-restricted CD8-positive T cells, guiding antigen-specific T cell immune response to eliminate infected or transformed cells. May also present self-peptides derived from the signal sequence of secreted or membrane proteins, although T cells specific for these peptides are usually inactivated to prevent autoreactivity. Both the peptide and the MHC molecule are recognized by TCR, the peptide is responsible for the fine specificity of antigen recognition and MHC residues account for the MHC restriction of T cells. Typically presents intracellular peptide antigens of 8 to 13 amino acids that arise from cytosolic proteolysis via IFNG-induced immunoproteasome or via endopeptidase IDE/insulin-degrading enzyme. Can bind different peptides containing allele-specific binding motifs, which are mainly defined by anchor residues at position 2 and 9. In terms of biological role, allele A*01:01: Presents a restricted peptide repertoire including viral epitopes derived from IAV NP/nucleoprotein (CTELKLSDY), IAV PB1/polymerase basic protein 1 (VSDGGPNLY), HAdV-11 capsid L3/hexon protein (LTDLGQNLLY), SARS-CoV-2 3a/ORF3a (FTSDYYQLY) as well as tumor peptide antigens including MAGE1 (EADPTGHSY), MAGEA3 (EVDPIGHLY) and WT1 (TSEKRPFMCAY), all having in common a canonical motif with a negatively charged Asp or Glu residue at position 3 and a Tyr anchor residue at the C-terminus. A number of HLA-A*01:01-restricted peptides carry a post-translational modification with oxidation and N-terminal acetylation being the most frequent. Fails to present highly immunogenic peptides from the EBV latent antigens. Functionally, allele A*02:01: A major allele in human populations, presents immunodominant viral epitopes derived from IAV M/matrix protein 1 (GILGFVFTL), HIV-1 env (TLTSCNTSV), HIV-1 gag-pol (ILKEPVHGV), HTLV-1 Tax (LLFGYPVYV), HBV C/core antigen (FLPSDFFPS), HCMV UL83/pp65 (NLVPMVATV) as well as tumor peptide antigens including MAGEA4 (GVYDGREHTV), WT1 (RMFPNAPYL) and CTAG1A/NY-ESO-1 (SLLMWITQC), all having in common hydrophobic amino acids at position 2 and at the C-terminal anchors. Its function is as follows. Allele A*03:01: Presents viral epitopes derived from IAV NP (ILRGSVAHK), HIV-1 nef (QVPLRPMTYK), HIV-1 gag-pol (AIFQSSMTK), SARS-CoV-2 N/nucleoprotein (KTFPPTEPK) as well as tumor peptide antigens including PMEL (LIYRRRLMK), NODAL (HAYIQSLLK), TRP-2 (RMYNMVPFF), all having in common hydrophobic amino acids at position 2 and Lys or Arg anchor residues at the C-terminus. May also display spliced peptides resulting from the ligation of two separate proteasomal cleavage products that are not contiguous in the parental protein. Allele A*11:01: Presents several immunodominant epitopes derived from HIV-1 gag-pol and HHV-4 EBNA4, containing the peptide motif with Val, Ile, Thr, Leu, Tyr or Phe at position 2 and Lys anchor residue at the C-terminus. Important in the control of HIV-1, EBV and HBV infections. Presents an immunodominant epitope derived from SARS-CoV-2 N/nucleoprotein (KTFPPTEPK). In terms of biological role, allele A*23:01: Interacts with natural killer (NK) cell receptor KIR3DL1 and may contribute to functional maturation of NK cells and self-nonself discrimination during innate immune response. Functionally, allele A*24:02: Presents viral epitopes derived from HIV-1 nef (RYPLTFGWCF), EBV lytic- and latent-cycle antigens BRLF1 (TYPVLEEMF), BMLF1 (DYNFVKQLF) and LMP2 (IYVLVMLVL), SARS-CoV nucleocapsid/N (QFKDNVILL), as well as tumor peptide antigens including PRAME (LYVDSLFFL), all sharing a common signature motif, namely an aromatic residue Tyr or Phe at position 2 and a nonhydrophobic anchor residue Phe, Leu or Iso at the C-terminus. Interacts with natural killer (NK) cell receptor KIR3DL1 and may contribute to functional maturation of NK cells and self-nonself discrimination during innate immune response. Its function is as follows. Allele A*26:01: Presents several epitopes derived from HIV-1 gag-pol (EVIPMFSAL, ETKLGKAGY) and env (LVSDGGPNLY), carrying as anchor residues preferentially Glu at position 1, Val or Thr at position 2 and Tyr at the C-terminus. Allele A*29:02: Presents peptides having a common motif, namely a Glu residue at position 2 and Tyr or Leu anchor residues at the C-terminus. In terms of biological role, allele A*32:01: Interacts with natural killer (NK) cell receptor KIR3DL1 and may contribute to functional maturation of NK cells and self-nonself discrimination during innate immune response. Functionally, allele A*68:01: Presents viral epitopes derived from IAV NP (KTGGPIYKR) and HIV-1 tat (ITKGLGISYGR), having a common signature motif namely, Val or Thr at position 2 and positively charged residues Arg or Lys at the C-terminal anchor. Its function is as follows. Allele A*74:01: Presents immunodominant HIV-1 epitopes derived from gag-pol (GQMVHQAISPR, QIYPGIKVR) and rev (RQIHSISER), carrying an aliphatic residue at position 2 and Arg anchor residue at the C-terminus. May contribute to viral load control in chronic HIV-1 infection. The polypeptide is HLA class I histocompatibility antigen, A alpha chain (Homo sapiens (Human)).